The following is a 120-amino-acid chain: Ribosome-binding factor A (120 aa).

This sequence belongs to the RbfA family. As to quaternary structure, monomer. Binds 30S ribosomal subunits, but not 50S ribosomal subunits or 70S ribosomes.

Its subcellular location is the cytoplasm. Its function is as follows. One of several proteins that assist in the late maturation steps of the functional core of the 30S ribosomal subunit. Associates with free 30S ribosomal subunits (but not with 30S subunits that are part of 70S ribosomes or polysomes). Required for efficient processing of 16S rRNA. May interact with the 5'-terminal helix region of 16S rRNA. The chain is Ribosome-binding factor A from Clostridium botulinum (strain Loch Maree / Type A3).